We begin with the raw amino-acid sequence, 224 residues long: Pyridoxal 5'-phosphate synthase subunit PdxT (224 aa).

Residue 55–57 coordinates L-glutamine; that stretch reads GES. Residue cysteine 87 is the Nucleophile of the active site. L-glutamine-binding positions include arginine 113 and 142 to 143; that span reads IR. Catalysis depends on charge relay system residues histidine 178 and glutamate 180.

Belongs to the glutaminase PdxT/SNO family. In terms of assembly, in the presence of PdxS, forms a dodecamer of heterodimers. Only shows activity in the heterodimer.

The enzyme catalyses aldehydo-D-ribose 5-phosphate + D-glyceraldehyde 3-phosphate + L-glutamine = pyridoxal 5'-phosphate + L-glutamate + phosphate + 3 H2O + H(+). It carries out the reaction L-glutamine + H2O = L-glutamate + NH4(+). The protein operates within cofactor biosynthesis; pyridoxal 5'-phosphate biosynthesis. Catalyzes the hydrolysis of glutamine to glutamate and ammonia as part of the biosynthesis of pyridoxal 5'-phosphate. The resulting ammonia molecule is channeled to the active site of PdxS. The chain is Pyridoxal 5'-phosphate synthase subunit PdxT from Syntrophus aciditrophicus (strain SB).